A 617-amino-acid chain; its full sequence is Proline--tRNA ligase (617 aa).

The protein belongs to the class-II aminoacyl-tRNA synthetase family. ProS type 1 subfamily. As to quaternary structure, homodimer.

The protein localises to the cytoplasm. The enzyme catalyses tRNA(Pro) + L-proline + ATP = L-prolyl-tRNA(Pro) + AMP + diphosphate. Its function is as follows. Catalyzes the attachment of proline to tRNA(Pro) in a two-step reaction: proline is first activated by ATP to form Pro-AMP and then transferred to the acceptor end of tRNA(Pro). As ProRS can inadvertently accommodate and process non-cognate amino acids such as alanine and cysteine, to avoid such errors it has two additional distinct editing activities against alanine. One activity is designated as 'pretransfer' editing and involves the tRNA(Pro)-independent hydrolysis of activated Ala-AMP. The other activity is designated 'posttransfer' editing and involves deacylation of mischarged Ala-tRNA(Pro). The misacylated Cys-tRNA(Pro) is not edited by ProRS. This Streptococcus pneumoniae (strain CGSP14) protein is Proline--tRNA ligase.